The chain runs to 513 residues: ATP synthase subunit alpha (513 aa).

Gly169–Thr176 provides a ligand contact to ATP.

It belongs to the ATPase alpha/beta chains family. In terms of assembly, F-type ATPases have 2 components, CF(1) - the catalytic core - and CF(0) - the membrane proton channel. CF(1) has five subunits: alpha(3), beta(3), gamma(1), delta(1), epsilon(1). CF(0) has three main subunits: a(1), b(2) and c(9-12). The alpha and beta chains form an alternating ring which encloses part of the gamma chain. CF(1) is attached to CF(0) by a central stalk formed by the gamma and epsilon chains, while a peripheral stalk is formed by the delta and b chains.

The protein localises to the cell inner membrane. The catalysed reaction is ATP + H2O + 4 H(+)(in) = ADP + phosphate + 5 H(+)(out). In terms of biological role, produces ATP from ADP in the presence of a proton gradient across the membrane. The alpha chain is a regulatory subunit. The protein is ATP synthase subunit alpha of Tolumonas auensis (strain DSM 9187 / NBRC 110442 / TA 4).